A 351-amino-acid polypeptide reads, in one-letter code: Anthranilate phosphoribosyltransferase (351 aa).

5-phospho-alpha-D-ribose 1-diphosphate-binding positions include Gly80, 83–84, Thr88, 90–93, 108–116, and Ser120; these read GD, NIST, and KHGNRSITS. Anthranilate is bound at residue Gly80. Residue Ser92 participates in Mg(2+) binding. Asn111 contacts anthranilate. Residue Arg166 participates in anthranilate binding. Mg(2+) contacts are provided by Asp229 and Glu230.

Belongs to the anthranilate phosphoribosyltransferase family. In terms of assembly, homodimer. Mg(2+) is required as a cofactor.

The enzyme catalyses N-(5-phospho-beta-D-ribosyl)anthranilate + diphosphate = 5-phospho-alpha-D-ribose 1-diphosphate + anthranilate. The protein operates within amino-acid biosynthesis; L-tryptophan biosynthesis; L-tryptophan from chorismate: step 2/5. Its function is as follows. Catalyzes the transfer of the phosphoribosyl group of 5-phosphorylribose-1-pyrophosphate (PRPP) to anthranilate to yield N-(5'-phosphoribosyl)-anthranilate (PRA). The chain is Anthranilate phosphoribosyltransferase from Chlorobaculum tepidum (strain ATCC 49652 / DSM 12025 / NBRC 103806 / TLS) (Chlorobium tepidum).